The chain runs to 185 residues: ATP synthase subunit delta (185 aa).

The protein belongs to the ATPase delta chain family. F-type ATPases have 2 components, F(1) - the catalytic core - and F(0) - the membrane proton channel. F(1) has five subunits: alpha(3), beta(3), gamma(1), delta(1), epsilon(1). F(0) has three main subunits: a(1), b(2) and c(10-14). The alpha and beta chains form an alternating ring which encloses part of the gamma chain. F(1) is attached to F(0) by a central stalk formed by the gamma and epsilon chains, while a peripheral stalk is formed by the delta and b chains.

Its subcellular location is the cell inner membrane. Functionally, f(1)F(0) ATP synthase produces ATP from ADP in the presence of a proton or sodium gradient. F-type ATPases consist of two structural domains, F(1) containing the extramembraneous catalytic core and F(0) containing the membrane proton channel, linked together by a central stalk and a peripheral stalk. During catalysis, ATP synthesis in the catalytic domain of F(1) is coupled via a rotary mechanism of the central stalk subunits to proton translocation. This protein is part of the stalk that links CF(0) to CF(1). It either transmits conformational changes from CF(0) to CF(1) or is implicated in proton conduction. The protein is ATP synthase subunit delta of Ehrlichia chaffeensis (strain ATCC CRL-10679 / Arkansas).